Here is a 452-residue protein sequence, read N- to C-terminus: tRNA-2-methylthio-N(6)-dimethylallyladenosine synthase (452 aa).

In terms of domain architecture, MTTase N-terminal spans 5–121; sequence RRYHITTFGC…LADLLAQVEA (117 aa). Residues cysteine 14, cysteine 50, cysteine 84, cysteine 156, cysteine 160, and cysteine 163 each contribute to the [4Fe-4S] cluster site. Residues 142 to 379 form the Radical SAM core domain; the sequence is RDSTITAWVN…NHLVAQMAAD (238 aa). A TRAM domain is found at 382 to 446; sequence QRYLGRTEEV…AFSLTGQILS (65 aa).

It belongs to the methylthiotransferase family. MiaB subfamily. Monomer. [4Fe-4S] cluster is required as a cofactor.

The protein localises to the cytoplasm. The enzyme catalyses N(6)-dimethylallyladenosine(37) in tRNA + (sulfur carrier)-SH + AH2 + 2 S-adenosyl-L-methionine = 2-methylsulfanyl-N(6)-dimethylallyladenosine(37) in tRNA + (sulfur carrier)-H + 5'-deoxyadenosine + L-methionine + A + S-adenosyl-L-homocysteine + 2 H(+). Its function is as follows. Catalyzes the methylthiolation of N6-(dimethylallyl)adenosine (i(6)A), leading to the formation of 2-methylthio-N6-(dimethylallyl)adenosine (ms(2)i(6)A) at position 37 in tRNAs that read codons beginning with uridine. The polypeptide is tRNA-2-methylthio-N(6)-dimethylallyladenosine synthase (Synechococcus elongatus (strain ATCC 33912 / PCC 7942 / FACHB-805) (Anacystis nidulans R2)).